The sequence spans 173 residues: Large ribosomal subunit protein uL10 (173 aa).

It belongs to the universal ribosomal protein uL10 family. Part of the ribosomal stalk of the 50S ribosomal subunit. The N-terminus interacts with L11 and the large rRNA to form the base of the stalk. The C-terminus forms an elongated spine to which L12 dimers bind in a sequential fashion forming a multimeric L10(L12)X complex.

Forms part of the ribosomal stalk, playing a central role in the interaction of the ribosome with GTP-bound translation factors. This is Large ribosomal subunit protein uL10 from Corynebacterium aurimucosum (strain ATCC 700975 / DSM 44827 / CIP 107346 / CN-1) (Corynebacterium nigricans).